Here is a 310-residue protein sequence, read N- to C-terminus: Cytochrome f (310 aa).

A signal peptide spans 1 to 27 (MRRLLSPLFAALIVGVTVLTAPSTSWA). Positions 28, 48, 51, and 52 each coordinate heme. Residues 277 to 297 (IYGLLAFFAAVALAQIMLVLK) form a helical membrane-spanning segment.

The protein belongs to the cytochrome f family. As to quaternary structure, the 4 large subunits of the cytochrome b6-f complex are cytochrome b6, subunit IV (17 kDa polypeptide, PetD), cytochrome f and the Rieske protein, while the 4 small subunits are PetG, PetL, PetM and PetN. The complex functions as a dimer. The cofactor is heme.

Its subcellular location is the cellular thylakoid membrane. Its function is as follows. Component of the cytochrome b6-f complex, which mediates electron transfer between photosystem II (PSII) and photosystem I (PSI), cyclic electron flow around PSI, and state transitions. This Synechococcus sp. (strain WH7803) protein is Cytochrome f.